A 121-amino-acid chain; its full sequence is Griffithsin (121 aa).

In terms of domain architecture, Jacalin-type lectin spans 1–120 (SLTHRKFGGS…LDSLDIYYEQ (120 aa)).

Its function is as follows. Mixed specificity lectin with anti-HIV activity. Binds to HIV envelope glycoproteins, including exterior membrane glycoprotein gp120, and inhibits viral entry into cells. Binding to gp120 is dependent on gp120 being glycosylated, and is inhibited by mannose, glucose and N-acetylglucosamine. In Griffithsia sp. (strain Q66D336) (Red alga), this protein is Griffithsin.